The following is a 212-amino-acid chain: MDIAALREEYTRHGLSRDDLNVDPFKQFETWFKQACESQLLEPNAMSLATASDQGEPSLRTVLLKYFDNQGFVFFTNYESNKAKQIEENPYVALLFLWLPLERQVKIRGKAAKISTAESFRYFTTRPRGSQLGAWCSEQSSVISSRQLLEMKFEEIRRKFAQGEIPLPSFWGGYRIVPHYFEFWQGRPNRLHDRFSYTLQEDNTWEIHRLSP.

Residues 7 to 10 (REEY) and Lys-65 each bind substrate. FMN is bound by residues 60-65 (RTVLLK), 75-76 (FT), Lys-82, and Gln-104. Positions 122, 126, and 130 each coordinate substrate. Residues 139 to 140 (QS) and Trp-184 each bind FMN. Position 190-192 (190-192 (RLH)) interacts with substrate. Position 194 (Arg-194) interacts with FMN.

This sequence belongs to the pyridoxamine 5'-phosphate oxidase family. As to quaternary structure, homodimer. FMN serves as cofactor.

The enzyme catalyses pyridoxamine 5'-phosphate + O2 + H2O = pyridoxal 5'-phosphate + H2O2 + NH4(+). It catalyses the reaction pyridoxine 5'-phosphate + O2 = pyridoxal 5'-phosphate + H2O2. It participates in cofactor metabolism; pyridoxal 5'-phosphate salvage; pyridoxal 5'-phosphate from pyridoxamine 5'-phosphate: step 1/1. It functions in the pathway cofactor metabolism; pyridoxal 5'-phosphate salvage; pyridoxal 5'-phosphate from pyridoxine 5'-phosphate: step 1/1. Functionally, catalyzes the oxidation of either pyridoxine 5'-phosphate (PNP) or pyridoxamine 5'-phosphate (PMP) into pyridoxal 5'-phosphate (PLP). The protein is Pyridoxine/pyridoxamine 5'-phosphate oxidase of Rippkaea orientalis (strain PCC 8801 / RF-1) (Cyanothece sp. (strain PCC 8801)).